The primary structure comprises 353 residues: MRKRISAIIMTLFMVLVSCNSGGVAEDPKTVYLTSIANLGKGFLDVFVTFGDMVTGAFGIKADTKKSDIGKYFTDIESTMTSVKKKLQDEVAKNGNYPKVKTAVDEFVAILGKIEKGAKEASKGATGDVIIGNTVKNGDAVPGEATSVNSLVKGIKEIVGVVLKEGKADADATKDDSKKDIGKLFTATTDANRADNAAAQAAAASIGAVTGADILQAIVQSKENPVANSTDGIEKATDAAEIAVAPAKDNKKEIKDGAKKDAVIAAGIALRAMAKNGTFSIKNNEDAAVTTINSAAASAVNKILSTLIIAIRNTVDSGLKTINEALATVKQEDKSVEATNTAEATTSGQQAKN.

An N-terminal signal peptide occupies residues 1–18 (MRKRISAIIMTLFMVLVS). C19 carries the N-palmitoyl cysteine lipid modification. C19 carries the S-diacylglycerol cysteine lipid modification. A disordered region spans residues 332–353 (EDKSVEATNTAEATTSGQQAKN). The segment covering 337-353 (EATNTAEATTSGQQAKN) has biased composition (polar residues).

The protein belongs to the variable large protein (Vlp) family. Delta subfamily.

It localises to the cell outer membrane. The Vlp and Vsp proteins are antigenically distinct proteins, only one vlp or vsp gene is transcriptionally active at any one time. Switching between these genes is a mechanism of host immune response evasion. This is Variable large protein 17 from Borrelia hermsii.